Reading from the N-terminus, the 365-residue chain is Phospho-N-acetylmuramoyl-pentapeptide-transferase (365 aa).

10 helical membrane-spanning segments follow: residues 29–49 (VGGL…IIVW), 73–93 (GTPT…VIIW), 97–117 (SNIY…LGLV), 133–153 (ILNK…IMFI), 171–191 (IVCK…VGTS), 202–222 (GLVI…TWVV), 242–262 (LVVV…FNSY), 266–286 (IFMG…VSIL), 291–311 (YLLL…IFQV), and 341–361 (IVVR…VIFI).

The protein belongs to the glycosyltransferase 4 family. MraY subfamily. Mg(2+) is required as a cofactor.

It is found in the cell inner membrane. It catalyses the reaction UDP-N-acetyl-alpha-D-muramoyl-L-alanyl-gamma-D-glutamyl-meso-2,6-diaminopimeloyl-D-alanyl-D-alanine + di-trans,octa-cis-undecaprenyl phosphate = di-trans,octa-cis-undecaprenyl diphospho-N-acetyl-alpha-D-muramoyl-L-alanyl-D-glutamyl-meso-2,6-diaminopimeloyl-D-alanyl-D-alanine + UMP. Its pathway is cell wall biogenesis; peptidoglycan biosynthesis. In terms of biological role, catalyzes the initial step of the lipid cycle reactions in the biosynthesis of the cell wall peptidoglycan: transfers peptidoglycan precursor phospho-MurNAc-pentapeptide from UDP-MurNAc-pentapeptide onto the lipid carrier undecaprenyl phosphate, yielding undecaprenyl-pyrophosphoryl-MurNAc-pentapeptide, known as lipid I. The chain is Phospho-N-acetylmuramoyl-pentapeptide-transferase from Blochmanniella floridana.